The sequence spans 883 residues: MPSLNDIRSTFLDYFRRNGHRVVESSPLVPRNDPTLMFTNSGMVQFKNCFTGLEHRDYTRATTAQKCVRAGGKHNDLDNVGYTARHHTFFEMLGNFSFGDYFKSDAIPFAWELLTKDFDIPKEKLLVTVYHTDHEAAEIWKKVAGLPDERIIRIPTNDNFWMMGPTGPCGPCTEIFFDHGPSIWGGPPGSADEDGDRFIEIWNLVFMQNEQHPDGSMTPLPKQSIDTGMGLERIGALLQGKHDNYDTDLMRSLIEASAHATSTDPDGPGKTHHRVIADHLRSTSFLIADGVMPSNEGRGYVLRRIMRRAMRHAHLLGAQDPVMHRLVPALVRQMGAAYPELTRGQALIEETLKLEETRFRQTLERGLRLLEDELGHLPEGSPLPGEAAFKLYDTYGFPLDLTQDALREKGRKVDVEGFEAAMAEQKAKARASWSGSGETKDAAIWFDLAETHGATEFLGYDTEQAEGQVLALVAAGAETASVGVGQTVQIILNQTPFYAESGGQVGDTGELRTDTGRARITDVKKGQGLFLHFAEVVEGEIRQGQGATLVVDHARRSAIRANHSATHLLHEALRRALGDHVAQRGSLNAPDRLRFDFSHSRALSPEELAAVEAEVNGFIRSNGAVETRIMSPDDARALGAQALFGEKYGDEVRVVSMGTLAGSGKGTDGQTYSLELCGGTHVSRLGDIGLCVILGDSASSAGVRRIEALTGEGALTYLNEQMKRLTDVAAALKAAPAELVDRVKALVEERRQLQNEVAQLRREAAMGGGAASEAKEIGGVKFLAQVVQGVPGKDMPGLIDEMKARVGSGAVLLISDTGGKAALAAGVTPDLTDRLSAVTLVKAAAEALGGRGGGGRPDMAQAGAADASQADAAIRAAEAVMGG.

Zn(2+) contacts are provided by His563, His567, Cys677, and His681.

Belongs to the class-II aminoacyl-tRNA synthetase family. It depends on Zn(2+) as a cofactor.

The protein resides in the cytoplasm. The enzyme catalyses tRNA(Ala) + L-alanine + ATP = L-alanyl-tRNA(Ala) + AMP + diphosphate. Functionally, catalyzes the attachment of alanine to tRNA(Ala) in a two-step reaction: alanine is first activated by ATP to form Ala-AMP and then transferred to the acceptor end of tRNA(Ala). Also edits incorrectly charged Ser-tRNA(Ala) and Gly-tRNA(Ala) via its editing domain. In Cereibacter sphaeroides (strain ATCC 17029 / ATH 2.4.9) (Rhodobacter sphaeroides), this protein is Alanine--tRNA ligase.